Here is a 484-residue protein sequence, read N- to C-terminus: Trigger factor (484 aa).

In terms of domain architecture, PPIase FKBP-type spans 165-244 (GDFVQIDLTA…VQSVKERELP (80 aa)). Residues 429-484 (DAVSEEPADADAEAVVADAPAEEAAEAPAAEEAPAEKPKKKAPAKKKASEKAADSE) are disordered. The segment covering 430–440 (AVSEEPADADA) has biased composition (acidic residues). The span at 475–484 (KASEKAADSE) shows a compositional bias: basic and acidic residues.

The protein belongs to the FKBP-type PPIase family. Tig subfamily.

It is found in the cytoplasm. The enzyme catalyses [protein]-peptidylproline (omega=180) = [protein]-peptidylproline (omega=0). Its function is as follows. Involved in protein export. Acts as a chaperone by maintaining the newly synthesized protein in an open conformation. Functions as a peptidyl-prolyl cis-trans isomerase. The polypeptide is Trigger factor (Clavibacter michiganensis subsp. michiganensis (strain NCPPB 382)).